Reading from the N-terminus, the 1132-residue chain is DNA-directed RNA polymerase I subunit RPA2 (1132 aa).

The C4-type zinc-finger motif lies at 1067–1098 (CMDCGSLLSPLLEKPPPNWSATRHRKTICLLC).

Belongs to the RNA polymerase beta chain family. As to quaternary structure, component of the RNA polymerase I (Pol I) complex consisting of at least 13 subunits.

It localises to the nucleus. The protein localises to the nucleolus. The protein resides in the chromosome. The enzyme catalyses RNA(n) + a ribonucleoside 5'-triphosphate = RNA(n+1) + diphosphate. DNA-dependent RNA polymerase catalyzes the transcription of DNA into RNA using the four ribonucleoside triphosphates as substrates. Second largest core component of RNA polymerase I which synthesizes ribosomal RNA precursors. Proposed to contribute to the polymerase catalytic activity and forms the polymerase active center together with the largest subunit. Pol I is composed of mobile elements and RPA2 is part of the core element with the central large cleft and probably a clamp element that moves to open and close the cleft. This chain is DNA-directed RNA polymerase I subunit RPA2 (polr1b), found in Danio rerio (Zebrafish).